Here is a 92-residue protein sequence, read N- to C-terminus: Mediator-associated protein 3 (92 aa).

Positions 13-70 (KDLRRKIKKTVKKILESSNLYKITEIKAREEASLKLDLDLSQDPYKVIVKEEVENFLE) constitute a DEK-C domain.

In terms of assembly, associated with the Mediator complex.

The protein localises to the nucleus. This Arabidopsis thaliana (Mouse-ear cress) protein is Mediator-associated protein 3.